A 280-amino-acid chain; its full sequence is uncharacterized protein (280 aa).

Y54 acts as the Proton donor in catalysis. Position 116 (H116) interacts with substrate. NADP(+) is bound at residue 194–246; sequence SPLMQGQLLDHPVLADIAQTYNKSVAQIILRWDLQHGIITIPKSTKEHRIKEN.

This sequence belongs to the aldo/keto reductase family.

This is an uncharacterized protein from Bacillus subtilis (strain 168).